The following is a 532-amino-acid chain: Probable cytochrome P450 524A1 (532 aa).

The chain crosses the membrane as a helical span at residues 8–28 (FIIFILLAALAVFVSEATSKV). Residue cysteine 478 coordinates heme.

It belongs to the cytochrome P450 family. Heme is required as a cofactor.

Its subcellular location is the membrane. This chain is Probable cytochrome P450 524A1 (cyp524A1), found in Dictyostelium discoideum (Social amoeba).